A 90-amino-acid polypeptide reads, in one-letter code: Acylphosphatase (90 aa).

In terms of domain architecture, Acylphosphatase-like spans 3–90 (QYHMIADGRV…KGYRTFSISY (88 aa)). Residues arginine 18 and asparagine 36 contribute to the active site.

It belongs to the acylphosphatase family.

It catalyses the reaction an acyl phosphate + H2O = a carboxylate + phosphate + H(+). This chain is Acylphosphatase (acyP), found in Bacillus velezensis (strain DSM 23117 / BGSC 10A6 / LMG 26770 / FZB42) (Bacillus amyloliquefaciens subsp. plantarum).